Here is a 761-residue protein sequence, read N- to C-terminus: Probable beta-galactosidase 2 (761 aa).

An N-terminal signal peptide occupies residues 1 to 23; it reads MGTIKNNFQLLWLILLIVVLVNG. N39 and N110 each carry an N-linked (GlcNAc...) asparagine glycan. Catalysis depends on E195, which acts as the Proton donor. An N-linked (GlcNAc...) asparagine glycan is attached at N206. The active-site Nucleophile is the E267. N-linked (GlcNAc...) asparagine glycosylation is found at N385, N405, N438, N501, N552, N553, N577, N592, N642, N690, and N696.

It belongs to the glycosyl hydrolase 35 family.

The enzyme catalyses Hydrolysis of terminal non-reducing beta-D-galactose residues in beta-D-galactosides.. Cleaves beta-linked terminal galactosyl residues from gangliosides, glycoproteins, and glycosaminoglycans. The polypeptide is Probable beta-galactosidase 2 (glb2) (Dictyostelium discoideum (Social amoeba)).